Here is a 34-residue protein sequence, read N- to C-terminus: uncharacterized protein (34 aa).

Basic and acidic residues predominate over residues methionine 1–proline 12. The interval methionine 1 to isoleucine 21 is disordered.

This is an uncharacterized protein from Saccharomyces cerevisiae (strain ATCC 204508 / S288c) (Baker's yeast).